The following is a 301-amino-acid chain: Sulfate adenylyltransferase subunit 2 (301 aa).

A disordered region spans residues R279–F301.

Belongs to the PAPS reductase family. CysD subfamily. Heterodimer composed of CysD, the smaller subunit, and CysN.

The enzyme catalyses sulfate + ATP + H(+) = adenosine 5'-phosphosulfate + diphosphate. Its pathway is sulfur metabolism; hydrogen sulfide biosynthesis; sulfite from sulfate: step 1/3. Functionally, with CysN forms the ATP sulfurylase (ATPS) that catalyzes the adenylation of sulfate producing adenosine 5'-phosphosulfate (APS) and diphosphate, the first enzymatic step in sulfur assimilation pathway. APS synthesis involves the formation of a high-energy phosphoric-sulfuric acid anhydride bond driven by GTP hydrolysis by CysN coupled to ATP hydrolysis by CysD. The chain is Sulfate adenylyltransferase subunit 2 from Geotalea uraniireducens (strain Rf4) (Geobacter uraniireducens).